The chain runs to 130 residues: Large ribosomal subunit protein bL20c (130 aa).

The protein belongs to the bacterial ribosomal protein bL20 family.

Its subcellular location is the plastid. It is found in the chloroplast. In terms of biological role, binds directly to 23S ribosomal RNA and is necessary for the in vitro assembly process of the 50S ribosomal subunit. It is not involved in the protein synthesizing functions of that subunit. This is Large ribosomal subunit protein bL20c (rpl20) from Glycine max (Soybean).